The primary structure comprises 599 residues: mRNA export factor MEX67 (599 aa).

Position 2 is an N-acetylserine (serine 2). 2 LRR repeats span residues isoleucine 163–alanine 184 and asparagine 189–lysine 210. In terms of domain architecture, LRRCT spans asparagine 224 to serine 262. The NTF2 domain occupies serine 280–valine 467. The segment at lysine 408–lysine 439 is disordered. A TAP-C domain is found at proline 546–phenylalanine 599.

It belongs to the NXF family. As to quaternary structure, interacts with nucleoporin complex NUP84 and MTR2. Interacts with MIP6.

It is found in the nucleus. Its subcellular location is the cytoplasm. Its function is as follows. Involved in the export of mRNA from the nucleus to the cytoplasm. This is mRNA export factor MEX67 (MEX67) from Saccharomyces cerevisiae (strain ATCC 204508 / S288c) (Baker's yeast).